Consider the following 560-residue polypeptide: uncharacterized protein (560 aa).

Positions 1-29 are cleaved as a signal peptide; sequence MKSALKKSVVSTSISLILASGMAAFAAHA. D66, D67, and S132 together coordinate Ca(2+). The Nucleophile role is filled by S132. Position 132 is a 3-oxoalanine (Ser) (S132). The active site involves H185. D345 and N346 together coordinate Ca(2+).

This sequence belongs to the sulfatase family. Ca(2+) is required as a cofactor. In terms of processing, the conversion to 3-oxoalanine (also known as C-formylglycine, FGly), of a serine or cysteine residue in prokaryotes and of a cysteine residue in eukaryotes, is critical for catalytic activity.

This is an uncharacterized protein from Escherichia coli (strain K12).